A 237-amino-acid chain; its full sequence is Uridylate kinase (237 aa).

Residue 10 to 13 (KLSG) participates in ATP binding. G51 contacts UMP. G52 and R56 together coordinate ATP. Residues D71 and 132–139 (MGMPFFST) contribute to the UMP site. N160, Y166, and D169 together coordinate ATP.

It belongs to the UMP kinase family. In terms of assembly, homohexamer.

It is found in the cytoplasm. The enzyme catalyses UMP + ATP = UDP + ADP. It functions in the pathway pyrimidine metabolism; CTP biosynthesis via de novo pathway; UDP from UMP (UMPK route): step 1/1. Inhibited by UTP. Its function is as follows. Catalyzes the reversible phosphorylation of UMP to UDP. In Nocardioides sp. (strain ATCC BAA-499 / JS614), this protein is Uridylate kinase.